The chain runs to 526 residues: Glucose-6-phosphate isomerase (526 aa).

E320 (proton donor) is an active-site residue. Catalysis depends on residues H349 and K453.

The protein belongs to the GPI family.

It localises to the cytoplasm. The catalysed reaction is alpha-D-glucose 6-phosphate = beta-D-fructose 6-phosphate. It functions in the pathway carbohydrate biosynthesis; gluconeogenesis. The protein operates within carbohydrate degradation; glycolysis; D-glyceraldehyde 3-phosphate and glycerone phosphate from D-glucose: step 2/4. Its function is as follows. Catalyzes the reversible isomerization of glucose-6-phosphate to fructose-6-phosphate. In Gloeothece citriformis (strain PCC 7424) (Cyanothece sp. (strain PCC 7424)), this protein is Glucose-6-phosphate isomerase.